A 205-amino-acid chain; its full sequence is Heat shock protein beta-1 (205 aa).

R12 is subject to Omega-N-methylarginine. S15 is modified (phosphoserine; by MAPKAPK2 and MAPKAPK3). A phosphoserine mark is found at S26 and S65. The segment at 70–205 is interaction with TGFB1I1; sequence APAYSRALSR…AAKSDETAAK (136 aa). One can recognise a sHSP domain in the interval 76–184; the sequence is ALSRQLSSGV…QSNEITIPVT (109 aa). S78 and S82 each carry phosphoserine; by MAPKAPK2, MAPKAPK3 and MAPKAPK5. 3 positions are modified to phosphoserine: S83, S86, and S98. K123 carries the N6-acetyllysine modification. Residue T174 is modified to Phosphothreonine. A phosphoserine mark is found at S176 and S199.

This sequence belongs to the small heat shock protein (HSP20) family. In terms of assembly, homooligomer. Homodimer; becomes monomeric upon activation. Heterooligomer; with HSPB6. Associates with alpha- and beta-tubulin. Interacts with TGFB1I1. Interacts with CRYAB. Interacts with HSPB8. Interacts with HSPBAP1. In terms of processing, phosphorylated upon exposure to protein kinase C activators and heat shock. Phosphorylation by MAPKAPK2 and MAPKAPK3 in response to stress dissociates HSPB1 from large small heat-shock protein (sHsps) oligomers and impairs its chaperone activity and ability to protect against oxidative stress effectively. Phosphorylation by MAPKAPK5 in response to PKA stimulation induces F-actin rearrangement. Detected in all tissues tested: skeletal muscle, heart, aorta, large intestine, small intestine, stomach, esophagus, bladder, adrenal gland, thyroid, pancreas, testis, adipose tissue, kidney, liver, spleen, cerebral cortex, blood serum and cerebrospinal fluid. Highest levels are found in the heart and in tissues composed of striated and smooth muscle.

The protein localises to the cytoplasm. It is found in the nucleus. The protein resides in the cytoskeleton. Its subcellular location is the spindle. Its function is as follows. Small heat shock protein which functions as a molecular chaperone probably maintaining denatured proteins in a folding-competent state. Plays a role in stress resistance and actin organization. Through its molecular chaperone activity may regulate numerous biological processes including the phosphorylation and the axonal transport of neurofilament proteins. The protein is Heat shock protein beta-1 (HSPB1) of Homo sapiens (Human).